The chain runs to 373 residues: Glutamate 5-kinase 2 (373 aa).

Residue lysine 11 coordinates ATP. Substrate contacts are provided by serine 51, aspartate 138, and asparagine 150. ATP is bound by residues 170–171 (SD) and 212–218 (TGGMKSK). Residues 279–355 (EGDIVVHNES…TNQETAASSQ (77 aa)) enclose the PUA domain.

This sequence belongs to the glutamate 5-kinase family.

The protein localises to the cytoplasm. It carries out the reaction L-glutamate + ATP = L-glutamyl 5-phosphate + ADP. Its pathway is amino-acid biosynthesis; L-proline biosynthesis; L-glutamate 5-semialdehyde from L-glutamate: step 1/2. Its function is as follows. Catalyzes the transfer of a phosphate group to glutamate to form L-glutamate 5-phosphate. The sequence is that of Glutamate 5-kinase 2 from Bacillus licheniformis (strain ATCC 14580 / DSM 13 / JCM 2505 / CCUG 7422 / NBRC 12200 / NCIMB 9375 / NCTC 10341 / NRRL NRS-1264 / Gibson 46).